Here is a 1474-residue protein sequence, read N- to C-terminus: MGKNKLLHPSLVLLLLVLLPTDASVSGKPQYMVLVPSLLHTEAAEKGCVLLSYLNETVTVSASLESVRGNRSLFTDLEAENDVLHCVAFAIPKSSSNEEVMFLTVQVKGPTQEFKKRTTVMVKNEDSLVFVQTDKSIYKPAQTVKFRVVSMDENFHPLNELIPLVYIQDPKGNRIAQWQSFQLEGGLKQFSFPLSSEPFQGSYKVVVQKKSGRRTEHPFTVEEFVLPKFEVQVTVPKIITILEEEMNVSVCGLYTYGKPVPGHVTVSICRKYSDASNCHGEDSQAFCEKFSGQLNSHGCFYQQVKTKVFQLKRKEYEMKLHTKAQIQEEGTVVELTGRQSSEITRTITKLSFVKADSHFRQGIPFFGQVRLVDGKGVPIPNKVIFIRGNEANYYSNATTDEHGLVQFSINTTNVMGTSLTVRVKYKDRSPCYGYQWVSEEHEEAHHTAYLVFSPSKSFVHLEPVSHELPCGQTQTVQAHYILNGGALQGLKKLSFYYLIMAKGGIVRTGTHGLLVKQEDMKGHFSISIPVKSDIAPVARLLIYAVLPTGDVIGDSAKYDVENCLANKVDLSFSPSQSLPALHAHLRVTAAPQSLCALRAVDQSVLLMKPDAELSASSVYNLLPEKDLTGFPGPLNDQGDEDCINRHNVYINGITYTPVSSTNEKDMYSFLEDMGLKAFTNSKIRKPKLCPQLQQYEMHGPEGLRVGFYESDVMGRGHARLVHAEEPPTETVRKYFPETWIWDLVVVNSSGVAEVGVTVPDTITEWKAGAFCLSEDAGLGISSTASLRAFQPFFVELTMPYSVIRGEVFTLKATVLNYLPKCIRVSVQLEASPAFLAVPVEKEQAPHCICANGRQTVSWAITPKSLGNVNFTVSAEALESQELCGTEVASVPEYGKKDTVIKPLLVEPEGLEKETTFNSLLCPSGGEVSEELSLKLPPNVVEESARASVSVLGDILGSAMQNTQNLLQMPYGCGEQNMVLFAPNIYVLDYLNETQQLTPEIKSKAIGYLNTGYQRQLNYKHYDGSYSTFGERYGRNQGNTWLTAFVLKTFAQARAYIFIDEAHITQALIWLSQRQKDNGCFRSSGSLLNNAIKGGVEDEVTLSAYITIALLEIPLTVTHPVVRNALFCLESAWKTAQEGDHGSHVYTKALLAYAFALAGNQDKRKEVLQSLHEEAVKKDNSVHWERPQKPKAPVGHFYEPQAPSAEVEMTSYALLAYLTAQPAPTSEDLTSATNIVKWITKQQNAQGGFSSTQDTVVALHALSKYGAATFTRTGKAAQVTIQSSGTFSNKFQVDNNNRLLLQQVSLPELPGEYSMKVTGEGCVYLQTSLKYNILPEKEEFPFALGVQTLPQTCDEPKAHTSFQISLSVSYTGSRSASNMAIVDVKMVSGFIPLKPTVKMLERSNHVSRTEVSNNHVLIYLDKVSNQTLSLFFTVLQDVPVRDLKPAIVKVYDYYETDEFAIAEYNAPCSKDLGNA.

The N-terminal stretch at 1–23 (MGKNKLLHPSLVLLLLVLLPTDA) is a signal peptide. Cys-48 and Cys-86 are oxidised to a cystine. 3 N-linked (GlcNAc...) asparagine glycosylation sites follow: Asn-55, Asn-70, and Asn-247. 2 disulfides stabilise this stretch: Cys-251–Cys-299 and Cys-269–Cys-287. Residues Asn-396 and Asn-410 are each glycosylated (N-linked (GlcNAc...) asparagine). 8 disulfide bridges follow: Cys-470–Cys-563, Cys-595–Cys-771, Cys-642–Cys-689, Cys-821–Cys-849, Cys-847–Cys-883, Cys-921–Cys-1321, Cys-1079–Cys-1127, and Cys-1352–Cys-1467. Residues 690-728 (PQLQQYEMHGPEGLRVGFYESDVMGRGHARLVHAEEPPT) are bait region. Isoglutamyl lysine isopeptide (Gln-Lys) (interchain with K-? in other proteins) cross-links involve residues Gln-693 and Gln-694. Inhibitory regions lie at residues 704 to 709 (RVGFYE), 719 to 723 (RLVHA), and 730 to 735 (TVRKYF). Asn-869 is a glycosylation site (N-linked (GlcNAc...) asparagine). A cross-link (isoglutamyl cysteine thioester (Cys-Gln)) is located at residues 972–975 (CGEQ). N-linked (GlcNAc...) asparagine glycosylation is present at Asn-991. Asn-1424 is a glycosylation site (N-linked (GlcNAc...) asparagine).

It belongs to the protease inhibitor I39 (alpha-2-macroglobulin) family. Homotetramer; disulfide-linked. Plasma.

The protein resides in the secreted. In terms of biological role, is able to inhibit all four classes of proteinases by a unique 'trapping' mechanism. This protein has a peptide stretch, called the 'bait region' which contains specific cleavage sites for different proteinases. When a proteinase cleaves the bait region, a conformational change is induced in the protein which traps the proteinase. The entrapped enzyme remains active against low molecular weight substrates (activity against high molecular weight substrates is greatly reduced). Following cleavage in the bait region a thioester bond is hydrolyzed and mediates the covalent binding of the protein to the proteinase. The chain is Alpha-2-macroglobulin (A2M) from Pongo abelii (Sumatran orangutan).